The following is a 768-amino-acid chain: Calcium up-regulated protein G (768 aa).

The segment at 1 to 22 (MINIEDISKSSNQSEEKQLKST) is disordered. Ricin B-type lectin domains are found at residues 1–107 (MINI…WTID) and 100–248 (KTQI…WGIN).

It belongs to the cup family.

It localises to the cytoplasm. Its subcellular location is the membrane. Its function is as follows. May play an important role in stabilizing and/or regulating the cell membrane during Ca(2+) stress or certain stages of development. In Dictyostelium discoideum (Social amoeba), this protein is Calcium up-regulated protein G (cupG).